A 105-amino-acid polypeptide reads, in one-letter code: Small ribosomal subunit protein eS24 (105 aa).

The segment at Ser85 to Glu105 is disordered. A compositionally biased stretch (acidic residues) spans Glu92–Glu105.

Belongs to the eukaryotic ribosomal protein eS24 family.

The sequence is that of Small ribosomal subunit protein eS24 from Methanosphaera stadtmanae (strain ATCC 43021 / DSM 3091 / JCM 11832 / MCB-3).